Reading from the N-terminus, the 450-residue chain is tRNA-2-methylthio-N(6)-dimethylallyladenosine synthase (450 aa).

Positions 14 to 132 (GEFFIETWGC…FPNYLNEVKK (119 aa)) constitute an MTTase N-terminal domain. [4Fe-4S] cluster is bound by residues Cys23, Cys59, Cys93, Cys169, Cys173, and Cys176. In terms of domain architecture, Radical SAM core spans 155–385 (RKNSMKAFVT…VEVVNEISAK (231 aa)). One can recognise a TRAM domain in the interval 388–450 (KAYEGKIEEV…NSFSLTGEEI (63 aa)).

This sequence belongs to the methylthiotransferase family. MiaB subfamily. Monomer. The cofactor is [4Fe-4S] cluster.

It localises to the cytoplasm. It catalyses the reaction N(6)-dimethylallyladenosine(37) in tRNA + (sulfur carrier)-SH + AH2 + 2 S-adenosyl-L-methionine = 2-methylsulfanyl-N(6)-dimethylallyladenosine(37) in tRNA + (sulfur carrier)-H + 5'-deoxyadenosine + L-methionine + A + S-adenosyl-L-homocysteine + 2 H(+). Catalyzes the methylthiolation of N6-(dimethylallyl)adenosine (i(6)A), leading to the formation of 2-methylthio-N6-(dimethylallyl)adenosine (ms(2)i(6)A) at position 37 in tRNAs that read codons beginning with uridine. In Clostridium botulinum (strain Okra / Type B1), this protein is tRNA-2-methylthio-N(6)-dimethylallyladenosine synthase.